We begin with the raw amino-acid sequence, 933 residues long: DNA repair-scaffolding protein (933 aa).

3 disordered regions span residues 1–34 (MSGARRPGTSKRKRNWHIEHPSFREERSQQLRRG), 67–174 (SEKT…KGTL), and 205–224 (YSSDSEKEEDPEHSLFIDSE). Composition is skewed to basic and acidic residues over residues 16-29 (WHIEHPSFREERSQ), 71-87 (GITEKHLELSPKPKTET), and 119-132 (RDGRHGPRADRLGD). Residues 138-148 (PEDEDIEDELQ) show a composition bias toward acidic residues. The necessary for interaction with RAD51 stretch occupies residues 175 to 469 (DISDCDSCAS…GTGWTHGHEK (295 aa)). A compositionally biased stretch (basic and acidic residues) spans 214–224 (DPEHSLFIDSE).

Found in a complex, at least composed of BLM, RAD51 and SPIDR; the complex formation is mediated by SPIDR. Interacts (via C-terminal region) with BLM; the interaction is direct. Interacts with RAD51; the interaction is direct. Interacts (via the C-terminal region) with FIGNL1 (via N-terminal one-half region); the interaction is direct.

The protein resides in the nucleus. Plays a role in DNA double-strand break (DBS) repair via homologous recombination (HR). Serves as a scaffolding protein that helps to promote the recruitment of DNA-processing enzymes like the helicase BLM and recombinase RAD51 to site of DNA damage, and hence contributes to maintain genomic integrity. This is DNA repair-scaffolding protein (Spidr) from Mus musculus (Mouse).